A 121-amino-acid chain; its full sequence is Securin (121 aa).

The disordered stretch occupies residues 1–24; sequence RATEKSVKTNGPLKQKQTTFSAKK. 2 consecutive short sequence motifs (TEK-box) follow at residues 3-5 and 26-28; these read TEK. The disordered stretch occupies residues 93 to 121; that stretch reads LGPPSPLNMPSPPWESDVLQSPSSILSTL. Residues 95–105 carry the SH3-binding motif; it reads PPSPLNMPSPP. Residues 95–105 show a composition bias toward pro residues; that stretch reads PPSPLNMPSPP. Ser-97 bears the Phosphoserine; by CDK1 mark. Over residues 110-121 the composition is skewed to polar residues; the sequence is VLQSPSSILSTL.

The protein belongs to the securin family. In terms of assembly, interacts with the caspase-like ESPL1, and prevents its protease activity probably by covering its active site. Interacts with p53/TP53 and blocks its activity probably by blocking its binding to DNA. Interacts with the Ku 70 kDa subunit of ds-DNA kinase. Interacts with PTTG1IP. Interacts with RPS10 and DNAJA1. In terms of processing, phosphorylated by CDK1 during mitosis. Post-translationally, phosphorylated in vitro by ds-DNA kinase. Ubiquitinated through 'Lys-11' linkage of ubiquitin moieties by the anaphase promoting complex (APC) at the onset of anaphase, conducting to its degradation. 'Lys-11'-linked ubiquitination is mediated by the E2 ligase UBE2C/UBCH10.

It localises to the cytoplasm. The protein resides in the nucleus. Functionally, regulatory protein, which plays a central role in chromosome stability, in the p53/TP53 pathway, and DNA repair. Probably acts by blocking the action of key proteins. During the mitosis, it blocks Separase/ESPL1 function, preventing the proteolysis of the cohesin complex and the subsequent segregation of the chromosomes. At the onset of anaphase, it is ubiquitinated, conducting to its destruction and to the liberation of ESPL1. Its function is however not limited to a blocking activity, since it is required to activate ESPL1. Negatively regulates the transcriptional activity and related apoptosis activity of p53/TP53. The negative regulation of p53/TP53 may explain the strong transforming capability of the protein when it is overexpressed. May also play a role in DNA repair via its interaction with Ku, possibly by connecting DNA damage-response pathways with sister chromatid separation. In Sus scrofa (Pig), this protein is Securin (PTTG1).